Consider the following 227-residue polypeptide: Ribose-5-phosphate isomerase A (227 aa).

Substrate contacts are provided by residues 26 to 29, 82 to 85, and 95 to 98; these read TGST, DGAD, and KGGG. Residue E104 is the Proton acceptor of the active site. K122 is a substrate binding site.

This sequence belongs to the ribose 5-phosphate isomerase family. As to quaternary structure, homodimer.

It carries out the reaction aldehydo-D-ribose 5-phosphate = D-ribulose 5-phosphate. It participates in carbohydrate degradation; pentose phosphate pathway; D-ribose 5-phosphate from D-ribulose 5-phosphate (non-oxidative stage): step 1/1. Its function is as follows. Catalyzes the reversible conversion of ribose-5-phosphate to ribulose 5-phosphate. The protein is Ribose-5-phosphate isomerase A of Streptococcus pyogenes serotype M5 (strain Manfredo).